The primary structure comprises 480 residues: Probable glycosyltransferase At5g25310 (480 aa).

The Cytoplasmic portion of the chain corresponds to 1–10 (MDKFQSKFTR). The helical; Signal-anchor for type II membrane protein transmembrane segment at 11–31 (FGFISICFGSIALVLLISHCS) threads the bilayer. Topologically, residues 32–480 (TSFFDYSFQK…WLRRLNLKLT (449 aa)) are lumenal. Asn85, Asn120, Asn243, Asn271, and Asn281 each carry an N-linked (GlcNAc...) asparagine glycan.

It belongs to the glycosyltransferase 47 family.

Its subcellular location is the golgi apparatus membrane. Its function is as follows. May be involved in cell wall biosynthesis. This chain is Probable glycosyltransferase At5g25310, found in Arabidopsis thaliana (Mouse-ear cress).